We begin with the raw amino-acid sequence, 542 residues long: Protein DETOXIFICATION 34 (542 aa).

A run of 12 helical transmembrane segments spans residues 97–117 (APIA…SIFV), 127–147 (AVAI…LGMA), 176–196 (ILLG…PLLI), 204–224 (IAEI…ALAI), 240–260 (IMAW…YLFI), 272–292 (AAFD…VVGW), 316–336 (FASA…IVLT), 344–364 (IAVG…MLFI), 390–410 (VIVT…VILI), 435–455 (LLGI…VAVG), 462–482 (VAYI…FLLG), and 491–511 (GIWI…LYMI).

It belongs to the multi antimicrobial extrusion (MATE) (TC 2.A.66.1) family.

It is found in the membrane. In Arabidopsis thaliana (Mouse-ear cress), this protein is Protein DETOXIFICATION 34.